Here is a 130-residue protein sequence, read N- to C-terminus: Small ribosomal subunit protein uS11 (130 aa).

The protein belongs to the universal ribosomal protein uS11 family. In terms of assembly, part of the 30S ribosomal subunit. Interacts with proteins S7 and S18. Binds to IF-3.

Its function is as follows. Located on the platform of the 30S subunit, it bridges several disparate RNA helices of the 16S rRNA. Forms part of the Shine-Dalgarno cleft in the 70S ribosome. The protein is Small ribosomal subunit protein uS11 of Prochlorococcus marinus subsp. pastoris (strain CCMP1986 / NIES-2087 / MED4).